The chain runs to 208 residues: TM2 domain-containing protein 1 (208 aa).

The first 37 residues, methionine 1–alanine 37, serve as a signal peptide directing secretion. The Extracellular segment spans residues serine 38–serine 129. 3 N-linked (GlcNAc...) asparagine glycosylation sites follow: asparagine 73, asparagine 76, and asparagine 97. Residues glycine 119 to isoleucine 167 enclose the TM2 domain. The helical transmembrane segment at leucine 130–leucine 150 threads the bilayer. Residues lysine 151–threonine 154 are Cytoplasmic-facing. Residues valine 155–glycine 175 form a helical membrane-spanning segment. The Extracellular segment spans residues proline 176–proline 208. Asparagine 198 is a glycosylation site (N-linked (GlcNAc...) asparagine).

Belongs to the TM2 family. As to quaternary structure, interacts with APP beta-APP42 (amyloid-beta protein 42). N-glycosylated.

It localises to the membrane. In terms of biological role, may participate in amyloid-beta-induced apoptosis via its interaction with beta-APP42. This Mus musculus (Mouse) protein is TM2 domain-containing protein 1 (Tm2d1).